Reading from the N-terminus, the 199-residue chain is Nucleoid occlusion factor SlmA (199 aa).

The region spanning 10–71 (RNRREEILQA…SLIEFIEDSL (62 aa)) is the HTH tetR-type domain. A DNA-binding region (H-T-H motif) is located at residues 34–53 (TTAKLAANVGVSEAALYRHF). Residues 120-140 (NRLQGRINQLFERIEVQIRQV) are a coiled coil.

Belongs to the nucleoid occlusion factor SlmA family. In terms of assembly, homodimer. Interacts with FtsZ.

It localises to the cytoplasm. The protein localises to the nucleoid. Required for nucleoid occlusion (NO) phenomenon, which prevents Z-ring formation and cell division over the nucleoid. Acts as a DNA-associated cell division inhibitor that binds simultaneously chromosomal DNA and FtsZ, and disrupts the assembly of FtsZ polymers. SlmA-DNA-binding sequences (SBS) are dispersed on non-Ter regions of the chromosome, preventing FtsZ polymerization at these regions. This is Nucleoid occlusion factor SlmA from Photorhabdus laumondii subsp. laumondii (strain DSM 15139 / CIP 105565 / TT01) (Photorhabdus luminescens subsp. laumondii).